Reading from the N-terminus, the 214-residue chain is Thymidylate kinase (214 aa).

10–17 serves as a coordination point for ATP; it reads GPDGAGKT.

Belongs to the thymidylate kinase family.

The catalysed reaction is dTMP + ATP = dTDP + ADP. Phosphorylation of dTMP to form dTDP in both de novo and salvage pathways of dTTP synthesis. The chain is Thymidylate kinase from Limosilactobacillus fermentum (strain NBRC 3956 / LMG 18251) (Lactobacillus fermentum).